A 756-amino-acid polypeptide reads, in one-letter code: U3 small nucleolar RNA-associated protein 14 homolog B (756 aa).

The segment at 21-44 is disordered; it reads DLPENYPLSTSEDEGDSDGEGKRQ. Phosphoserine occurs at positions 29, 31, and 37. Coiled coils occupy residues 215–244 and 316–345; these read SLEEAKIRRAELQRMRALQSYYEARARREK and PEARKAMQEQLAKNRELTQKLQVVSESEEE. Composition is skewed to basic and acidic residues over residues 419 to 428 and 452 to 468; these read KERSFQERVD and LNKESHQSDNQKVSSEE. Disordered stretches follow at residues 419–468 and 497–539; these read KERS…SSEE and QQGE…KKKK. Positions 449-476 form a coiled coil; the sequence is LQKLNKESHQSDNQKVSSEENVLHIQRE. Serine 554 is modified (phosphoserine).

The protein belongs to the UTP14 family. Expressed predominantly in germ cells of the testis; weakly expressed in brain.

It is found in the nucleus. The protein resides in the nucleolus. Functionally, essential for spermatogenesis. May be required specifically for ribosome biogenesis and hence protein synthesis during male meiosis. This Mus musculus (Mouse) protein is U3 small nucleolar RNA-associated protein 14 homolog B (Utp14b).